The primary structure comprises 252 residues: Ribosomal RNA small subunit methyltransferase J (252 aa).

S-adenosyl-L-methionine contacts are provided by residues 105–106, 121–122, and Asp-175; these read RD and ER.

The protein belongs to the methyltransferase superfamily. RsmJ family.

The protein resides in the cytoplasm. The catalysed reaction is guanosine(1516) in 16S rRNA + S-adenosyl-L-methionine = N(2)-methylguanosine(1516) in 16S rRNA + S-adenosyl-L-homocysteine + H(+). Its function is as follows. Specifically methylates the guanosine in position 1516 of 16S rRNA. This Pasteurella multocida (strain Pm70) protein is Ribosomal RNA small subunit methyltransferase J.